Consider the following 747-residue polypeptide: MFNEITKSVTWNGKVLELSTGKIARQADGAVTVKMGNSVLLCTAVVAKKAKEGIGFFPLTINYREMAYATGKIPGGFFKREGKASDREVLVSRLIDRPIRPLFHPAFVNETHVTCSVLSYDPETPVDILAIIGASAALSLSPAPYLEIVAASKVGLINGEFVLNPTLELLKTSQLDLVVAGTSDSVMMVESEAHLLAEEQMLEAVKFGFESFQPVIKIIKELAEEAKKPKLEMQDLYPASLKKEIEKLFVKEIEQAFAIKSKQERSTNLDLIPEKVLTHFVSDIENKKYSNYQIESALKSIESDILRNEILEKNRRIDGRSTTDIRQIACEIGLLPSAHGSALFTRGETQSLVSTTFGTSLDEQIVDSLEGEYKERFMLNYIFPPYSVNEAMPMKAPSRREVGHGKLAWRAINPILPNKVQFPYSIRVVAETTESNGSSSMATVCGSSLALMYAGVPIKAPVAGIAMGLVKEGKKFAVLSDILGDEDYFGDMDFKVAGTSEGITALQMDIKISGVDFKIMTVALEQARLGRLHILEQMNKVISKPNSELSKNAPSTTTIKIDKDKIRDIIGPGGKVIKEICETSGAKIDISDDGSVSVYASDRDKLKVALDKIKAIAVEPEIGEIFNGTVMKVLDSGAFINYLGNKDGFVHISEISEERIETVSSVLKQGDIVKVKLIGFDNKGKAKLTIKNADKDKSSNNPKPKNNVNNAKENSEPERRDSSKKRAWNEDSNNDKEEAITERKYFN.

Positions 487 and 493 each coordinate Mg(2+). The KH domain maps to 554-613; the sequence is PSTTTIKIDKDKIRDIIGPGGKVIKEICETSGAKIDISDDGSVSVYASDRDKLKVALDKI. Positions 623–691 constitute an S1 motif domain; the sequence is GEIFNGTVMK…NKGKAKLTIK (69 aa). Residues 691-747 form a disordered region; it reads KNADKDKSSNNPKPKNNVNNAKENSEPERRDSSKKRAWNEDSNNDKEEAITERKYFN. Positions 699–712 are enriched in low complexity; that stretch reads SNNPKPKNNVNNAK. Residues 727–747 show a composition bias toward basic and acidic residues; it reads AWNEDSNNDKEEAITERKYFN.

It belongs to the polyribonucleotide nucleotidyltransferase family. It depends on Mg(2+) as a cofactor.

The protein resides in the cytoplasm. The enzyme catalyses RNA(n+1) + phosphate = RNA(n) + a ribonucleoside 5'-diphosphate. Functionally, involved in mRNA degradation. Catalyzes the phosphorolysis of single-stranded polyribonucleotides processively in the 3'- to 5'-direction. This is Polyribonucleotide nucleotidyltransferase from Rickettsia felis (strain ATCC VR-1525 / URRWXCal2) (Rickettsia azadi).